Here is a 358-residue protein sequence, read N- to C-terminus: Fructose-bisphosphate aldolase 3, cytoplasmic (358 aa).

Substrate is bound at residue Arg-39. Glu-183 serves as the catalytic Proton acceptor. Lys-225 serves as the catalytic Schiff-base intermediate with dihydroxyacetone-P. Residues 266–268 (SGG) and Arg-298 contribute to the substrate site.

Belongs to the class I fructose-bisphosphate aldolase family. Homotetramer.

Its subcellular location is the cytoplasm. The protein localises to the cytosol. It catalyses the reaction beta-D-fructose 1,6-bisphosphate = D-glyceraldehyde 3-phosphate + dihydroxyacetone phosphate. It participates in carbohydrate degradation; glycolysis; D-glyceraldehyde 3-phosphate and glycerone phosphate from D-glucose: step 4/4. In terms of biological role, fructose-bisphosphate aldolase that plays a key role in glycolysis and gluconeogenesis. The sequence is that of Fructose-bisphosphate aldolase 3, cytoplasmic from Oryza sativa subsp. japonica (Rice).